A 189-amino-acid chain; its full sequence is Protein C1orf43 homolog (189 aa).

The helical transmembrane segment at 11–31 threads the bilayer; it reads VNVVLVMAYGSLVFVLLFIFV.

Its subcellular location is the membrane. The protein resides in the golgi apparatus. It is found in the mitochondrion. Its function is as follows. General regulator of phagocytosis. Required to uptake Gram negative bacterium by macrophages. This Pongo abelii (Sumatran orangutan) protein is Protein C1orf43 homolog.